A 410-amino-acid chain; its full sequence is Peptidase T (410 aa).

H79 lines the Zn(2+) pocket. The active site involves D81. Zn(2+) is bound at residue D142. The active-site Proton acceptor is E176. E177, D199, and H381 together coordinate Zn(2+).

It belongs to the peptidase M20B family. Zn(2+) is required as a cofactor.

It localises to the cytoplasm. The enzyme catalyses Release of the N-terminal residue from a tripeptide.. Functionally, cleaves the N-terminal amino acid of tripeptides. The polypeptide is Peptidase T (Brevibacillus brevis (strain 47 / JCM 6285 / NBRC 100599)).